We begin with the raw amino-acid sequence, 350 residues long: Probable peptidyl-alpha-hydroxyglycine alpha-amidating lyase pgal-1 (350 aa).

An N-terminal signal peptide occupies residues 1-19 (MRASTACLVALLAPFYISA). The NHL 1 repeat unit spans residues 46 to 90 (DRELIGLFNPSKEIGQVSGLAVNKNGHIVAFHRSGRVWDEKSFND). N-linked (GlcNAc...) asparagine glycosylation is present at Asn103. 3 NHL repeats span residues 113 to 154 (KKVI…IDAK), 162 to 206 (LGEK…FDAK), and 212 to 256 (QINA…FSAG). 2 cysteine pairs are disulfide-bonded: Cys176–Cys196 and Cys241–Cys252.

This sequence belongs to the peptidyl-alpha-hydroxyglycine alpha-amidating lyase family. Requires Zn(2+) as cofactor.

Its subcellular location is the secreted. The enzyme catalyses a [peptide]-C-terminal (2S)-2-hydroxyglycine = a [peptide]-C-terminal amide + glyoxylate. In terms of biological role, probable lyase that catalyzes an essential reaction in C-terminal alpha-amidation of peptides. Mediates the dismutation of the unstable peptidyl(2-hydroxyglycine) intermediate to glyoxylate and the corresponding desglycine peptide amide. C-terminal amidation of peptides such as neuropeptides is essential for full biological activity. The sequence is that of Probable peptidyl-alpha-hydroxyglycine alpha-amidating lyase pgal-1 from Caenorhabditis elegans.